A 411-amino-acid chain; its full sequence is Serpin A3-3 (411 aa).

The signal sequence occupies residues 1 to 24 (MRAERLSPLLALGLLVAGIRSVHC). 5 N-linked (GlcNAc...) asparagine glycosylation sites follow: Asn-100, Asn-180, Asn-230, Asn-264, and Asn-318.

It belongs to the serpin family. As to quaternary structure, homodimer.

It localises to the cytoplasmic vesicle. The protein resides in the secretory vesicle. The protein localises to the chromaffin granule. Its subcellular location is the secreted. Its function is as follows. Serine protease inhibitor. Strongly inhibits elastase and trypsin stoichiometrically at the molar ratio of 1:1. Acts as a moderate inhibitor of plasmin and chymotrypsin. Does not inhibit thrombin, urokinase, kallikrein, tissue plasminogen activator, cathepsin G or the cysteine proteases papain, cathepsin B or cathepsin L. The chain is Serpin A3-3 (SERPINA3-3) from Bos taurus (Bovine).